Here is a 152-residue protein sequence, read N- to C-terminus: MATLLRVSSLCRANRASAFKSLLIRPVPCLTQDHHMVQTSQIHTSPNHHAGSKAASMHWTSERALSVALLGLLPAAYLYPGAAMDYSLAAALTLHGHWGLGQVVTDYVHGDAKIKMANTSLFALSALTFAGLCYFNYHDVGICKAVSMLWSL.

The transit peptide at 1–21 (MATLLRVSSLCRANRASAFKS) directs the protein to the mitochondrion. Residues 22-56 (LLIRPVPCLTQDHHMVQTSQIHTSPNHHAGSKAAS) are Mitochondrial matrix-facing. Residues 57-78 (MHWTSERALSVALLGLLPAAYL) form a helical membrane-spanning segment. The Mitochondrial intermembrane portion of the chain corresponds to 79-83 (YPGAA). A helical membrane pass occupies residues 84 to 104 (MDYSLAAALTLHGHWGLGQVV). His95 lines the heme b pocket. Topologically, residues 105 to 113 (TDYVHGDAK) are mitochondrial matrix. Residue Tyr107 coordinates a ubiquinone. The helical transmembrane segment at 114-135 (IKMANTSLFALSALTFAGLCYF) threads the bilayer. Residues 136–152 (NYHDVGICKAVSMLWSL) lie on the Mitochondrial intermembrane side of the membrane.

The protein belongs to the CybS family. In terms of assembly, component of complex II composed of four subunits: the flavoprotein (FP) SDHA, iron-sulfur protein (IP) SDHB, and a cytochrome b560 composed of SDHC and SDHD.

The protein localises to the mitochondrion inner membrane. Its pathway is carbohydrate metabolism; tricarboxylic acid cycle. Membrane-anchoring subunit of succinate dehydrogenase (SDH) that is involved in complex II of the mitochondrial electron transport chain and is responsible for transferring electrons from succinate to ubiquinone (coenzyme Q). SDH also oxidizes malate to the non-canonical enol form of oxaloacetate, enol-oxaloacetate. Enol-oxaloacetate, which is a potent inhibitor of the succinate dehydrogenase activity, is further isomerized into keto-oxaloacetate. The polypeptide is Succinate dehydrogenase [ubiquinone] cytochrome b small subunit, mitochondrial (sdhd) (Xenopus tropicalis (Western clawed frog)).